A 193-amino-acid chain; its full sequence is Peptidyl-tRNA hydrolase (193 aa).

Histidine 17 lines the tRNA pocket. The active-site Proton acceptor is the histidine 22. Phenylalanine 68, asparagine 70, and asparagine 116 together coordinate tRNA.

This sequence belongs to the PTH family. As to quaternary structure, monomer.

Its subcellular location is the cytoplasm. It carries out the reaction an N-acyl-L-alpha-aminoacyl-tRNA + H2O = an N-acyl-L-amino acid + a tRNA + H(+). Its function is as follows. Hydrolyzes ribosome-free peptidyl-tRNAs (with 1 or more amino acids incorporated), which drop off the ribosome during protein synthesis, or as a result of ribosome stalling. Catalyzes the release of premature peptidyl moieties from peptidyl-tRNA molecules trapped in stalled 50S ribosomal subunits, and thus maintains levels of free tRNAs and 50S ribosomes. The chain is Peptidyl-tRNA hydrolase from Xanthomonas axonopodis pv. citri (strain 306).